Reading from the N-terminus, the 599-residue chain is Elongation factor 4 (599 aa).

The tr-type G domain maps to 5 to 187 (SKIRNFSIVA…AIVKRLPAPT (183 aa)). GTP is bound by residues 17-22 (DHGKST) and 134-137 (NKID).

The protein belongs to the TRAFAC class translation factor GTPase superfamily. Classic translation factor GTPase family. LepA subfamily.

It is found in the cell inner membrane. The catalysed reaction is GTP + H2O = GDP + phosphate + H(+). Its function is as follows. Required for accurate and efficient protein synthesis under certain stress conditions. May act as a fidelity factor of the translation reaction, by catalyzing a one-codon backward translocation of tRNAs on improperly translocated ribosomes. Back-translocation proceeds from a post-translocation (POST) complex to a pre-translocation (PRE) complex, thus giving elongation factor G a second chance to translocate the tRNAs correctly. Binds to ribosomes in a GTP-dependent manner. The chain is Elongation factor 4 from Ruegeria sp. (strain TM1040) (Silicibacter sp.).